The sequence spans 415 residues: MMQQPPPASNGAATGPGQIPSDQQAYLQQQQSWMMQHQQQQQGQPPAGWNQQSAPSSGQPQQQQYGGGGSQNPGSAGEIRSLWIGDLQPWMDENYLMNVFGLTGEATAAKVIRNKQNGYSEGYGFIEFVNHATAERNLQTYNGAPMPSSEQAFRLNWAQLGAGERRQAEGPEHTVFVGDLAPDVTDHMLTETFKAVYSSVKGAKVVNDRTTGRSKGYGFVRFADESEQIRAMTEMNGQYCSSRPMRTGPAANKKPLTMQPASYQNTQGNSGESDPTNTTIFVGAVDQSVTEDDLKSVFGQFGELVHVKIPAGKRCGFVQYANRACAEQALSVLNGTQLGGQSIRLSWGRSPSNKQTQPDQAQYGGGGGYYGYPPQGYEAYGYAPPPQDPNAYYGGYAGGGYGNYQQPGGYQQQQQ.

Residues 1–77 (MMQQPPPASN…GGSQNPGSAG (77 aa)) are disordered. The segment covering 23–64 (QQAYLQQQQSWMMQHQQQQQGQPPAGWNQQSAPSSGQPQQQQ) has biased composition (low complexity). 3 consecutive RRM domains span residues 80–160 (RSLW…WAQL), 173–252 (HTVF…PAAN), and 278–350 (TTIF…WGRS). Positions 344–356 (RLSWGRSPSNKQT) are enriched in polar residues. Residues 344–369 (RLSWGRSPSNKQTQPDQAQYGGGGGY) form a disordered region.

Belongs to the polyadenylate-binding RBP45 family. In terms of assembly, interacts with the poly(A) tail of mRNA in nucleus. Mostly expressed in seedlings and stems, and, to a lower extent, in leaves and flowers.

It is found in the nucleus. Its function is as follows. Heterogeneous nuclear ribonucleoprotein (hnRNP)-protein binding the poly(A) tail of mRNA and probably involved in some steps of pre-mRNA maturation. This is Polyadenylate-binding protein RBP45C (RBP45C) from Arabidopsis thaliana (Mouse-ear cress).